The sequence spans 921 residues: Isoleucine--tRNA ligase 1 (921 aa).

Positions 57–67 match the 'HIGH' region motif; the sequence is PYANGDIHMGH. Glutamate 552 lines the L-isoleucyl-5'-AMP pocket. Residues 593 to 597 carry the 'KMSKS' region motif; the sequence is KMSKS. Lysine 596 contributes to the ATP binding site. Positions 888, 891, 908, and 911 each coordinate Zn(2+).

The protein belongs to the class-I aminoacyl-tRNA synthetase family. IleS type 1 subfamily. In terms of assembly, monomer. Zn(2+) is required as a cofactor.

Its subcellular location is the cytoplasm. The enzyme catalyses tRNA(Ile) + L-isoleucine + ATP = L-isoleucyl-tRNA(Ile) + AMP + diphosphate. Catalyzes the attachment of isoleucine to tRNA(Ile). As IleRS can inadvertently accommodate and process structurally similar amino acids such as valine, to avoid such errors it has two additional distinct tRNA(Ile)-dependent editing activities. One activity is designated as 'pretransfer' editing and involves the hydrolysis of activated Val-AMP. The other activity is designated 'posttransfer' editing and involves deacylation of mischarged Val-tRNA(Ile). The sequence is that of Isoleucine--tRNA ligase 1 from Bacillus cereus (strain ZK / E33L).